The following is a 29-amino-acid chain: Kalata-B15 (29 aa).

A cross-link (cyclopeptide (Gly-Asp)) is located at residues 1 to 29; it reads GLPVCGESCFGGSCYTPGCSCTWPICTRD. 3 cysteine pairs are disulfide-bonded: cysteine 5-cysteine 19, cysteine 9-cysteine 21, and cysteine 14-cysteine 26.

This is a cyclic peptide.

Probably participates in a plant defense mechanism. The protein is Kalata-B15 of Oldenlandia affinis.